The chain runs to 29 residues: Cysteine-rich venom protein 25-A (29 aa).

Belongs to the CRISP family. Contains 8 disulfide bonds. Expressed by the venom gland.

It localises to the secreted. The sequence is that of Cysteine-rich venom protein 25-A from Naja haje haje (Egyptian cobra).